The sequence spans 473 residues: MKTLYSPRRFYPVETLFNGTLALAGRDQETTGFAWWAGNARLINLSGKLLGAHVAHAGLIVFWAGAMNLFEVAHFVPEKPMYEQGLILLPHLATLGWGIGPGGEVIDTFPYFVSGVLHLISSAVLGFGGIYHSLLGPETLEESFPFFGYVWKDRNKMTTILGIHLILLGIGAFLLVLKALYFGGVYDTWAPGGGDVRKISNLTLSPSIIFGYLLKSPFGGEGWIVSVDDLEDIIGGHVWLGSICIFGGIWHILTKPFAWARRALVWSGEAYLSYSLAALSVFGFTACCFVWFNNTAYPSEFYGPTGPEASQAQAFTFLVRDQRLGANVGSAQGPTGLGKYLMRSPTGEVIFGGETMRFWDLRAPWLEPLRGPNGLDLSRLKKDIQPWQERRSAEYMTHAPLGSLNSVGGVATEINAVNYVSPRSWLSTSHFVLGFFLFVGHLWHAGRARAAAAGFEKGIDRDLEPVLFMTPLN.

Positions 1–14 are excised as a propeptide; the sequence is MKTLYSPRRFYPVE. Thr-15 carries the post-translational modification N-acetylthreonine. Thr-15 is subject to Phosphothreonine. The next 5 membrane-spanning stretches (helical) occupy residues 69 to 93, 134 to 155, 178 to 200, 255 to 275, and 291 to 312; these read LFEV…PHLA, LLGP…KDRN, KALY…RKIS, KPFA…LSYS, and WFNN…ASQA. Glu-367 serves as a coordination point for [CaMn4O5] cluster. A helical membrane pass occupies residues 447–471; that stretch reads RARAAAAGFEKGIDRDLEPVLFMTP.

It belongs to the PsbB/PsbC family. PsbC subfamily. PSII is composed of 1 copy each of membrane proteins PsbA, PsbB, PsbC, PsbD, PsbE, PsbF, PsbH, PsbI, PsbJ, PsbK, PsbL, PsbM, PsbT, PsbX, PsbY, PsbZ, Psb30/Ycf12, at least 3 peripheral proteins of the oxygen-evolving complex and a large number of cofactors. It forms dimeric complexes. Requires Binds multiple chlorophylls and provides some of the ligands for the Ca-4Mn-5O cluster of the oxygen-evolving complex. It may also provide a ligand for a Cl- that is required for oxygen evolution. PSII binds additional chlorophylls, carotenoids and specific lipids. as cofactor.

It is found in the plastid. The protein resides in the chloroplast thylakoid membrane. One of the components of the core complex of photosystem II (PSII). It binds chlorophyll and helps catalyze the primary light-induced photochemical processes of PSII. PSII is a light-driven water:plastoquinone oxidoreductase, using light energy to abstract electrons from H(2)O, generating O(2) and a proton gradient subsequently used for ATP formation. In Ranunculus macranthus (Large buttercup), this protein is Photosystem II CP43 reaction center protein.